Consider the following 352-residue polypeptide: Ion-translocating oxidoreductase complex subunit D (352 aa).

4 helical membrane-spanning segments follow: residues 20-40, 42-62, 69-91, and 123-143; these read IMLLVLIAALPGIAAQTWFFG, GTLFQIVLAAITALVAEAIVL, VASHLQDYSALLTGLLLAVSIPP, and PAMIGYVVLLISFPVQMTSWL. At Thr187 the chain carries FMN phosphoryl threonine. 5 consecutive transmembrane segments (helical) span residues 215-235, 242-262, 267-287, 301-321, and 322-342; these read LAGVGWQWVNLAWLVGGVFLL, WHIPVSFLLTLALCAALGWLF, LASPQLHLLSGATMLGAFFIL, LIFGALAGVLVWLIRSFGGYP, and DGVAFAVLLANITVPLIDYYT.

It belongs to the NqrB/RnfD family. The complex is composed of six subunits: RsxA, RsxB, RsxC, RsxD, RsxE and RsxG. FMN serves as cofactor.

It localises to the cell inner membrane. Its function is as follows. Part of a membrane-bound complex that couples electron transfer with translocation of ions across the membrane. Required to maintain the reduced state of SoxR. The polypeptide is Ion-translocating oxidoreductase complex subunit D (Salmonella choleraesuis (strain SC-B67)).